The sequence spans 380 residues: Beta-1,3-N-acetylglucosaminyltransferase lunatic fringe (380 aa).

Residues Met-1–Arg-8 lie on the Cytoplasmic side of the membrane. Residues Leu-9 to Pro-29 form a helical; Signal-anchor for type II membrane protein membrane-spanning segment. Residues Pro-30 to Phe-380 lie on the Lumenal side of the membrane. The segment at Ser-85–Pro-110 is disordered. A compositionally biased stretch (pro residues) spans Gly-90–Leu-107. Arg-130 is a substrate binding site. N-linked (GlcNAc...) asparagine glycosylation occurs at Asn-168. Intrachain disulfides connect Cys-169–Cys-180 and Cys-198–Cys-261. Asp-202 contributes to the substrate binding site. Asp-203 provides a ligand contact to Mn(2+). The active site involves Asp-291. His-315 provides a ligand contact to Mn(2+). Cys-365 and Cys-374 are joined by a disulfide.

Belongs to the glycosyltransferase 31 family. It depends on Mn(2+) as a cofactor. Co(2+) serves as cofactor. Post-translationally, a soluble form may be derived from the membrane form by proteolytic processing.

Its subcellular location is the golgi apparatus. It is found in the golgi apparatus membrane. The catalysed reaction is 3-O-(alpha-L-fucosyl)-L-threonyl-[EGF-like domain protein] + UDP-N-acetyl-alpha-D-glucosamine = 3-O-(N-acetyl-beta-D-glucosaminyl-(1-&gt;3)-alpha-L-fucosyl)-L-threonyl-[EGF-like domain protein] + UDP + H(+). It carries out the reaction 3-O-(alpha-L-fucosyl)-L-seryl-[EGF-like domain protein] + UDP-N-acetyl-alpha-D-glucosamine = 3-O-(N-acetyl-beta-D-glucosaminyl-(1-&gt;3)-alpha-L-fucosyl)-L-seryl-[EGF-like domain protein] + UDP + H(+). In terms of biological role, glycosyltransferase that initiates the elongation of O-linked fucose residues attached to EGF-like repeats in the extracellular domain of Notch molecules. Modulates NOTCH1 activity by modifying O-fucose residues at specific EGF-like domains resulting in inhibition of NOTCH1 activation by JAG1 and enhancement of NOTCH1 activation by DLL1 via an increase in its binding to DLL1. Decreases the binding of JAG1 to NOTCH2 but not that of DLL1. Essential mediator of somite segmentation and patterning. The polypeptide is Beta-1,3-N-acetylglucosaminyltransferase lunatic fringe (LFNG) (Bos taurus (Bovine)).